We begin with the raw amino-acid sequence, 876 residues long: Alanine--tRNA ligase (876 aa).

4 residues coordinate Zn(2+): His564, His568, Cys666, and His670.

This sequence belongs to the class-II aminoacyl-tRNA synthetase family. Homotetramer. The cofactor is Zn(2+).

The protein resides in the cytoplasm. It carries out the reaction tRNA(Ala) + L-alanine + ATP = L-alanyl-tRNA(Ala) + AMP + diphosphate. Catalyzes the attachment of alanine to tRNA(Ala) in a two-step reaction: alanine is first activated by ATP to form Ala-AMP and then transferred to the acceptor end of tRNA(Ala). Also edits incorrectly charged Ser-tRNA(Ala) and Gly-tRNA(Ala) via its editing domain. The sequence is that of Alanine--tRNA ligase from Salmonella typhimurium (strain LT2 / SGSC1412 / ATCC 700720).